Here is a 631-residue protein sequence, read N- to C-terminus: Biotin--protein ligase (631 aa).

Positions glutamate 341 to leucine 553 constitute a BPL/LPL catalytic domain.

Belongs to the biotin--protein ligase family. In terms of assembly, monomer.

The protein resides in the cytoplasm. It carries out the reaction apo-[methylmalonyl-CoA:pyruvate carboxytransferase] + biotin + ATP = holo-[methylmalonyl-CoA:pyruvate carboxytransferase] + AMP + diphosphate + H(+). The catalysed reaction is apo-[propionyl-CoA:carbon-dioxide ligase (ADP-forming)] + biotin + ATP = holo-[propionyl-CoA:carbon-dioxide ligase (ADP-forming)] + AMP + diphosphate + H(+). The enzyme catalyses apo-[3-methylcrotonoyl-CoA:carbon-dioxide ligase (ADP-forming)] + biotin + ATP = holo-[3-methylcrotonoyl-CoA:carbon-dioxide ligase (ADP-forming)] + AMP + diphosphate + H(+). It catalyses the reaction biotin + L-lysyl-[protein] + ATP = N(6)-biotinyl-L-lysyl-[protein] + AMP + diphosphate + H(+). Post-translational modification of specific protein by attachment of biotin. Acts on various carboxylases such as acetyl-CoA-carboxylase, pyruvate carboxylase, propionyl CoA carboxylase, and 3-methylcrotonyl CoA carboxylase. This Schizosaccharomyces pombe (strain 972 / ATCC 24843) (Fission yeast) protein is Biotin--protein ligase (bpl1).